Reading from the N-terminus, the 313-residue chain is Type I restriction enzyme EcoprrI endonuclease subunit (313 aa).

This sequence belongs to the HsdR family. The type I restriction/modification system is composed of three polypeptides R, M and S; the restriction enzyme has stoichiometry R(2)M(2)S(1) while the methyltransferase is M(2)S(1).

It catalyses the reaction Endonucleolytic cleavage of DNA to give random double-stranded fragments with terminal 5'-phosphates, ATP is simultaneously hydrolyzed.. In terms of biological role, the subtype C restriction (R) subunit of a type I restriction enzyme that recognizes 5'-CCAN(7)RTGC-3' and cleaves a random distance away. The R subunit is required for both endonuclease and ATPase activities but not for modification. Cleaves only non-methylated DNA, hemi-methylated and fully methylated DNA are not substrates. After locating a non-methylated recognition site, the enzyme complex serves as a molecular motor that translocates DNA in an ATP-dependent manner until a collision occurs that triggers cleavage. The prr locus restricts phage T4 mutants lacking polynucleotide kinase or RNA ligase; T4 mutants lacking these genes manifest a T4-induced anticodon nuclease (ACNase). This is a putative 'masking-agent' for the ACNase encoded by prrC. It is thought that Stp and other T4-encoded ACNase factors counteract the masking agents, thus activating the latent ACNase. The sequence is that of Type I restriction enzyme EcoprrI endonuclease subunit from Escherichia coli.